The following is a 134-amino-acid chain: Profilin-3 (134 aa).

A disulfide bridge links cysteine 13 with cysteine 118. The Involved in PIP2 interaction signature appears at 84–100 (AVIRGKKGSGGITIKKT). The residue at position 114 (threonine 114) is a Phosphothreonine.

This sequence belongs to the profilin family. In terms of assembly, occurs in many kinds of cells as a complex with monomeric actin in a 1:1 ratio. In terms of processing, phosphorylated by MAP kinases.

Its subcellular location is the cytoplasm. It is found in the cytoskeleton. Its function is as follows. Binds to actin and affects the structure of the cytoskeleton. At high concentrations, profilin prevents the polymerization of actin, whereas it enhances it at low concentrations. The chain is Profilin-3 from Olea europaea (Common olive).